A 697-amino-acid polypeptide reads, in one-letter code: UBA domain-containing protein 7 (697 aa).

Residues 1 to 94 (MDDLLDFNFY…STPKSSNYDP (94 aa)) form a disordered region. Positions 13-32 (STPSNQNNYSNNNSRTPSYS) are enriched in low complexity. Residues 62–77 (KKTDNKISLKELERQK) show a composition bias toward basic and acidic residues. Over residues 81 to 92 (PDSNSTPKSSNY) the composition is skewed to polar residues. Residues 181–221 (KLSSNEMYEKLRDLGFSDDQSRLALENSGSLEDAIEYILEK) form the UBA domain. Positions 306–346 (PEILPKTPIPKRKPHKVPMNEKVSEDRITTNQSRSGNDESS) are disordered. Basic and acidic residues predominate over residues 323–333 (PMNEKVSEDRI). The segment covering 334 to 345 (TTNQSRSGNDES) has biased composition (polar residues). One copy of the TPR repeat lies at 412 to 445 (VEEQQSTGNELFRKGDFSQAIEEFTNSLSQLPAK). Positions 547-573 (ISSHSSESHSKRTTQQPKSTPNHTNIK) are disordered. The span at 559 to 573 (TTQQPKSTPNHTNIK) shows a compositional bias: polar residues. The 64-residue stretch at 633-696 (CRWQKVSLSE…AWELFKQQND (64 aa)) folds into the J domain.

The protein is UBA domain-containing protein 7 (ucp7) of Schizosaccharomyces pombe (strain 972 / ATCC 24843) (Fission yeast).